A 196-amino-acid polypeptide reads, in one-letter code: HTH-type transcriptional regulator BetI (196 aa).

Positions 8–68 (PIRRSQLIAA…ATMRHLMQAL (61 aa)) constitute an HTH tetR-type domain. The H-T-H motif DNA-binding region spans 31-50 (SIAYIARLAGVSNGIISHYF).

It participates in amine and polyamine biosynthesis; betaine biosynthesis via choline pathway [regulation]. Functionally, repressor involved in the biosynthesis of the osmoprotectant glycine betaine. It represses transcription of the choline transporter BetT and the genes of BetAB involved in the synthesis of glycine betaine. The chain is HTH-type transcriptional regulator BetI from Ectopseudomonas mendocina (strain ymp) (Pseudomonas mendocina).